The primary structure comprises 423 residues: Histone deacetylase 14, chloroplastic (423 aa).

Residues 1-44 constitute a chloroplast transit peptide; that stretch reads MSMALIVRPFFVPGSAGISGSRNICKKNQWRKYLLKPSGSSINC. A histone deacetylase region spans residues 62–392; it reads DARLIYSVSA…FRALLGEDSL (331 aa). Histidine 202 acts as the Proton donor/acceptor in catalysis. Zn(2+)-binding residues include aspartate 239, histidine 241, and aspartate 326.

Belongs to the histone deacetylase family. As to quaternary structure, interacts with PP2A2. Requires Zn(2+) as cofactor. As to expression, expressed in stems, leaves, flowers, siliques and mature seeds.

The protein localises to the nucleus. The protein resides in the cytoplasm. It is found in the plastid. It localises to the chloroplast stroma. Its subcellular location is the mitochondrion. The catalysed reaction is N-acetylserotonin + H2O = serotonin + acetate. The enzyme catalyses N-acetyltyramine + H2O = tyramine + acetate. It carries out the reaction N-acetyltryptamine + H2O = tryptamine + acetate. It catalyses the reaction melatonin + H2O = 5-methoxytryptamine + acetate. Its activity is inhibited by trichostatin A (TSA), a known histone deacetylase inhibitor. In terms of biological role, regulates lysine acetylation levels of plastid proteins related to photosynthesis. Involved in the regulation of the activation state of RuBisCO, which is controlled by lysine acetylation of RuBisCO activase under low-light conditions. Associates with alpha- and beta-tubulins and deacetylate alpha-tubulin. Does not seem to be required for the cellular patterning in the root epidermis. Involved in the regulation of melatonin biosynthesis by catalyzing the deacetylation of N-acetylserotonin to produce serotonin. N-acetylserotonin is methylated by acetylserotonin O-methyltransferase (ASMT) to produce melatonin (N-acetyl-5-methoxytryptamine). Deacetylates melatonin to produce 5-methoxytryptamine. In vitro, deacetylates N-acetyltyramine and N-acetyltryptamine to produce tyramine and tryptamine, respectively. This Arabidopsis thaliana (Mouse-ear cress) protein is Histone deacetylase 14, chloroplastic.